A 575-amino-acid chain; its full sequence is Protein NRD1 (575 aa).

The CID domain occupies 1 to 153 (MQQDDDFQNF…AIRSKCFAMD (153 aa)). Positions 225 to 282 (SHTSVGTVAPPQAHTITEYGSRRERERERERYNSRRNRSRSPPAPFSQPSTGRKDRYP) are disordered. Positions 244-257 (GSRRERERERERYN) are enriched in basic and acidic residues. S263, S265, and S271 each carry phosphoserine. Positions 339–409 (RTLFIGGVPL…LPLRTRWGVG (71 aa)) constitute an RRM domain. A disordered region spans residues 468–575 (VSSKAISQKM…NQQQQQQQQS (108 aa)). 2 stretches are compositionally biased toward polar residues: residues 471–482 (KAISQKMPTDSG) and 491–501 (PNKSGSISSIS). Composition is skewed to low complexity over residues 517 to 527 (QYVQPMMQQPY) and 549 to 575 (QQQF…QQQS).

It is found in the nucleus. Its function is as follows. Plays a role in sequence-specific regulation of nuclear pre-mRNA abundance. This chain is Protein NRD1 (NRD1), found in Saccharomyces cerevisiae (strain ATCC 204508 / S288c) (Baker's yeast).